The following is a 208-amino-acid chain: Ribosomal RNA large subunit methyltransferase E (208 aa).

S-adenosyl-L-methionine is bound by residues Gly-63, Trp-65, Asp-83, Asp-99, and Asp-124. The active-site Proton acceptor is Lys-164.

It belongs to the class I-like SAM-binding methyltransferase superfamily. RNA methyltransferase RlmE family.

Its subcellular location is the cytoplasm. The catalysed reaction is uridine(2552) in 23S rRNA + S-adenosyl-L-methionine = 2'-O-methyluridine(2552) in 23S rRNA + S-adenosyl-L-homocysteine + H(+). Functionally, specifically methylates the uridine in position 2552 of 23S rRNA at the 2'-O position of the ribose in the fully assembled 50S ribosomal subunit. This Salmonella choleraesuis (strain SC-B67) protein is Ribosomal RNA large subunit methyltransferase E.